We begin with the raw amino-acid sequence, 131 residues long: Glycine cleavage system H protein (131 aa).

Residues 24-106 form the Lipoyl-binding domain; sequence TVTIGITDHA…YEDGWIIKLK (83 aa). K65 is modified (N6-lipoyllysine).

This sequence belongs to the GcvH family. As to quaternary structure, the glycine cleavage system is composed of four proteins: P, T, L and H. Requires (R)-lipoate as cofactor.

Functionally, the glycine cleavage system catalyzes the degradation of glycine. The H protein shuttles the methylamine group of glycine from the P protein to the T protein. The chain is Glycine cleavage system H protein from Chromohalobacter salexigens (strain ATCC BAA-138 / DSM 3043 / CIP 106854 / NCIMB 13768 / 1H11).